The chain runs to 564 residues: MLASKFFMPTLKENPSDAVVPSHIYLVRGGFIRSLSAGIYEYLPLGLKVLRKIENIIRKHMDDSGALEVLLPILTPAELWKETGRWHVYGKELFRLKDRKDAEFALGPTHEETITDLVRKNVRSYKDLPLNFYQIQTKFRDEARPRYGLIRGREFIMKDGYSFDVSEEDAKKTYEVMKEAYHKIFKELGLDYLMVEADVGAIGGKFSHEFVVKVPSGEAHIVYCEKCGYAANVEAAKFHHHKLPPEEPKPIEKVYTPDIKSVEDVANFLNVPLTKLVKTLIYKIDDKDFVAVLIRGDRELNETKLANLFKAIDVRMATKEELESLGIPEGFVGPIGLNLPIYADFSLKELYNIVVGANEKDYHYINANIDRDFKVSGFYDLATAKEGDPCPVCHLPLKETTGLEVGHIFLLGTKYSESMKAYFVDKDGKEKSIIMGCYGIGVSRLISAIVEQYHDDKGIIWPENLAPFNVHILVLNPKDQESLNVGFDIYKKLKEKGLDVLLDERDESAGAKFKDADLIGIPHRIVIGKALKEGKVEYQKRDGSIKELVDVKLIINKLMDGYHG.

The protein belongs to the class-II aminoacyl-tRNA synthetase family. ProS type 1 subfamily. As to quaternary structure, homodimer.

It is found in the cytoplasm. It carries out the reaction tRNA(Pro) + L-proline + ATP = L-prolyl-tRNA(Pro) + AMP + diphosphate. Functionally, catalyzes the attachment of proline to tRNA(Pro) in a two-step reaction: proline is first activated by ATP to form Pro-AMP and then transferred to the acceptor end of tRNA(Pro). As ProRS can inadvertently accommodate and process non-cognate amino acids such as alanine and cysteine, to avoid such errors it has two additional distinct editing activities against alanine. One activity is designated as 'pretransfer' editing and involves the tRNA(Pro)-independent hydrolysis of activated Ala-AMP. The other activity is designated 'posttransfer' editing and involves deacylation of mischarged Ala-tRNA(Pro). The misacylated Cys-tRNA(Pro) is not edited by ProRS. This chain is Proline--tRNA ligase, found in Sulfurihydrogenibium sp. (strain YO3AOP1).